The sequence spans 467 residues: Sugar transporter ERD6-like 11 (467 aa).

Helical transmembrane passes span 26 to 46, 75 to 95, 105 to 125, 128 to 148, 155 to 177, 183 to 203, 266 to 286, 301 to 321, 328 to 348, 359 to 379, 402 to 422, and 428 to 448; these read ITACVILSTFVAVCSAFSYGC, FLNVGGAVGALFSGQLAVILG, FFCVFGWLSIAFAKNVFWLDL, ISLGIGVGLISYVVPVYIAEI, GAFTASNQLLQNSGVSLIYFFGT, VMAVIGAIPCILQTIGIFFIP, LVVGIGLMLIQQLSGASGITY, LGSMIFGVFVIPKALVGLILV, PLLLASAVGMSIGSLLIGVSF, LIPIFVFVNILVYFGCFAFGI, IVALTSWTSGWFVSYAFNFMF, and GTFYIFAAVGGMSFIFIWMLV.

It belongs to the major facilitator superfamily. Sugar transporter (TC 2.A.1.1) family.

The protein localises to the membrane. Its function is as follows. Sugar transporter. The chain is Sugar transporter ERD6-like 11 from Arabidopsis thaliana (Mouse-ear cress).